A 291-amino-acid chain; its full sequence is Membrane protein insertase YidC (291 aa).

Residues 1–19 (MKKKALLPLLLGVMVFLAG) form the signal peptide. A lipid anchor (N-palmitoyl cysteine) is attached at C20. C20 carries the S-diacylglycerol cysteine lipid modification. A run of 4 helical transmembrane segments spans residues 56 to 76 (YGIAIIVLVLVIRIILLPFML), 134 to 154 (ALGCLPVLIQMPVVMGLYFVL), 170 to 190 (WFNLIHPDIWITIIAGVLYFI), and 211 to 231 (MIVSPIMIIWISLSSASALGL). Residues 266–291 (FKENNSNSNKKGKNTQVVSKNNKKKK) are disordered.

This sequence belongs to the OXA1/ALB3/YidC family. Type 2 subfamily.

The protein localises to the cell membrane. Required for the insertion and/or proper folding and/or complex formation of integral membrane proteins into the membrane. Involved in integration of membrane proteins that insert both dependently and independently of the Sec translocase complex, as well as at least some lipoproteins. The chain is Membrane protein insertase YidC from Staphylococcus haemolyticus (strain JCSC1435).